A 472-amino-acid chain; its full sequence is Cysteine--tRNA ligase (472 aa).

Zn(2+) is bound at residue Cys28. The 'HIGH' region motif lies at 30–40 (PTVYDYTHIGH). Cys207, His232, and Glu236 together coordinate Zn(2+). Residues 264–268 (KMSKS) carry the 'KMSKS' region motif. ATP is bound at residue Lys267.

It belongs to the class-I aminoacyl-tRNA synthetase family. The cofactor is Zn(2+).

The protein localises to the cytoplasm. The catalysed reaction is tRNA(Cys) + L-cysteine + ATP = L-cysteinyl-tRNA(Cys) + AMP + diphosphate. This chain is Cysteine--tRNA ligase (cysS), found in Aeropyrum pernix (strain ATCC 700893 / DSM 11879 / JCM 9820 / NBRC 100138 / K1).